Here is a 346-residue protein sequence, read N- to C-terminus: Protein RecA (346 aa).

64 to 71 contributes to the ATP binding site; it reads GPESSGKT.

This sequence belongs to the RecA family.

The protein localises to the cytoplasm. Its function is as follows. Can catalyze the hydrolysis of ATP in the presence of single-stranded DNA, the ATP-dependent uptake of single-stranded DNA by duplex DNA, and the ATP-dependent hybridization of homologous single-stranded DNAs. It interacts with LexA causing its activation and leading to its autocatalytic cleavage. This is Protein RecA from Bacillus pumilus (strain SAFR-032).